We begin with the raw amino-acid sequence, 508 residues long: PTS system mannitol-specific EIICB component (508 aa).

At 1 to 30 (MSQTETQENKGLGRKVQAFGSFLSSMIMPN) the chain is on the cytoplasmic side. The 333-residue stretch at 19-351 (FGSFLSSMIM…LKFTKEPEED (333 aa)) folds into the PTS EIIC type-2 domain. A helical membrane pass occupies residues 31 to 52 (IGAFIAWGFIAAIFIDGGWWPN). Residues 53–56 (KDLS) are Extracellular-facing. Residues 57 to 77 (ELAGPMISYLIPLLIAYSGGR) traverse the membrane as a helical segment. Residues 78 to 141 (LIHEMRGGII…QGFEMLFNNF (64 aa)) lie on the Cytoplasmic side of the membrane. A helical transmembrane segment spans residues 142 to 163 (SAGILGFIMTIVGFKILAPIME). The Extracellular segment spans residues 164-172 (FIMHILSLA). The helical transmembrane segment at 173–193 (VEALVHAHLLPLVSIIVEPAK) threads the bilayer. The Cytoplasmic portion of the chain corresponds to 194-280 (IVFLNNAINH…VLMRPLLFIA (87 aa)). The chain crosses the membrane as a helical span at residues 281 to 300 (VILGGMTGVATYSLLDFGFK). Residues 301–320 (SPASPGSFIVYMLNAPKGEF) lie on the Extracellular side of the membrane. Residues 321–342 (LHMVLGVLLAAIVSFIVAALIL) form a helical membrane-spanning segment. Residues 343 to 508 (KFTKEPEEDL…RYDELLENLK (166 aa)) are Cytoplasmic-facing. Residues 355-400 (ATEKMEASKGKKSSVSSKLKGNEDNNATSTTASTSTSENNEEQSEE) form a disordered region. Positions 367-392 (SSVSSKLKGNEDNNATSTTASTSTSE) are enriched in low complexity. Residues 420 to 508 (NHVIFACDAG…RYDELLENLK (89 aa)) form the PTS EIIB type-2 domain. The active-site Phosphocysteine intermediate; for EIIB activity is the cysteine 426. Cysteine 426 carries the phosphocysteine; by EIIA modification.

In terms of assembly, homodimer.

It is found in the cell membrane. The catalysed reaction is D-mannitol(out) + N(pros)-phospho-L-histidyl-[protein] = D-mannitol 1-phosphate(in) + L-histidyl-[protein]. In terms of biological role, the phosphoenolpyruvate-dependent sugar phosphotransferase system (sugar PTS), a major carbohydrate active transport system, catalyzes the phosphorylation of incoming sugar substrates concomitantly with their translocation across the cell membrane. The enzyme II CmtAB PTS system is involved in D-mannitol transport. This chain is PTS system mannitol-specific EIICB component (mtlA), found in Staphylococcus saprophyticus subsp. saprophyticus (strain ATCC 15305 / DSM 20229 / NCIMB 8711 / NCTC 7292 / S-41).